Reading from the N-terminus, the 647-residue chain is Zinc finger protein 567 (647 aa).

One can recognise a KRAB domain in the interval Met32–Asn77. Residues Lys173, Lys202, and Lys217 each participate in a glycyl lysine isopeptide (Lys-Gly) (interchain with G-Cter in SUMO2) cross-link. The C2H2-type 1; degenerate zinc-finger motif lies at Phe210–Tyr232. 7 consecutive C2H2-type zinc fingers follow at residues His253–His275, Tyr281–His303, Phe309–His331, Tyr337–His359, Tyr365–His387, Tyr393–His415, and Tyr421–His443. A Glycyl lysine isopeptide (Lys-Gly) (interchain with G-Cter in SUMO2) cross-link involves residue Lys447. 7 consecutive C2H2-type zinc fingers follow at residues Tyr449 to His471, Tyr477 to His499, Tyr505 to His527, Tyr533 to His555, Tyr561 to His583, Tyr589 to His611, and Tyr617 to His639.

This sequence belongs to the krueppel C2H2-type zinc-finger protein family.

The protein localises to the nucleus. May be involved in transcriptional regulation. The protein is Zinc finger protein 567 (ZNF567) of Bos taurus (Bovine).